We begin with the raw amino-acid sequence, 90 residues long: DNA-binding protein HU-alpha (90 aa).

This sequence belongs to the bacterial histone-like protein family. In terms of assembly, heterodimer of an alpha and a beta chain.

Functionally, histone-like DNA-binding protein which is capable of wrapping DNA to stabilize it, and thus to prevent its denaturation under extreme environmental conditions. The chain is DNA-binding protein HU-alpha (hupA) from Aeromonas hydrophila.